The chain runs to 158 residues: ATP synthase subunit delta (158 aa).

The protein belongs to the ATPase delta chain family. In terms of assembly, F-type ATPases have 2 components, F(1) - the catalytic core - and F(0) - the membrane proton channel. F(1) has five subunits: alpha(3), beta(3), gamma(1), delta(1), epsilon(1). F(0) has three main subunits: a(1), b(2) and c(10-14). The alpha and beta chains form an alternating ring which encloses part of the gamma chain. F(1) is attached to F(0) by a central stalk formed by the gamma and epsilon chains, while a peripheral stalk is formed by the delta and b chains.

It is found in the cell membrane. Functionally, f(1)F(0) ATP synthase produces ATP from ADP in the presence of a proton or sodium gradient. F-type ATPases consist of two structural domains, F(1) containing the extramembraneous catalytic core and F(0) containing the membrane proton channel, linked together by a central stalk and a peripheral stalk. During catalysis, ATP synthesis in the catalytic domain of F(1) is coupled via a rotary mechanism of the central stalk subunits to proton translocation. In terms of biological role, this protein is part of the stalk that links CF(0) to CF(1). It either transmits conformational changes from CF(0) to CF(1) or is implicated in proton conduction. The polypeptide is ATP synthase subunit delta (Roseiflexus castenholzii (strain DSM 13941 / HLO8)).